Here is a 199-residue protein sequence, read N- to C-terminus: Recombination protein RecR (199 aa).

The segment at 58–73 adopts a C4-type zinc-finger fold; that stretch reads CQTCRILSETDLCSLC. One can recognise a Toprim domain in the interval 81–176; that stretch reads GQLCVVEMPS…TTTRIAHGVP (96 aa).

It belongs to the RecR family.

Functionally, may play a role in DNA repair. It seems to be involved in an RecBC-independent recombinational process of DNA repair. It may act with RecF and RecO. The chain is Recombination protein RecR from Nitrosococcus oceani (strain ATCC 19707 / BCRC 17464 / JCM 30415 / NCIMB 11848 / C-107).